The chain runs to 938 residues: MPPRLRPTHLEYVVDGVKLRSQLSAAALEHAGDELAQRRAALEILKNALFRGRMIAKERLENGAGGIETARLLSGVTDEVVSALYDFTTVHVFRARNPTEGERLALMAVGGYGRGTLAPFSDIDLLFVRPYKQTAHAESVIEYMLYALWDLGFKVGHASRTIDECLKLSREDFTIRTSILEARRLTGDEKLAGELVERFRKEVVKGTGAEFVAAKLKERDERHARAGASRYMVEPNVKEGKGGLRDLNTLFWIAQYLHPGESLEKVMHLEIFDRREVRTFIQALDFLWAVRCHLHFATGRPEERLSFDLQPEIARRMGYGDRGDAPAVERFMRRYFLFAKDVGSLTRVFAAKLEADRVKTAPKGISRFIPGRAQKRKPLDEPGFHEVGGRLGVDPEIFEADPVNLLKLFRIADQRNLDLHPDAFTAASRASGLITSAVRRDRHAAKVFLDILARGRDPQRTLALMNEAGVLGRFVPEFGRIVAQMQFNMYHSYTVDEHTLRAVGVIADIAAGRLAEDHPLAVQTMPLIADREALFLAMLLHDTGKGGAGGQELAGARAARQACERLGLERSKIELVAWLVEHHLVMSDYAQKRDVSDPRTVADFARIVQSPERLRLLLVLTVADIRAVGPGVWNGWKGQLMRELYTATEAVFRGGRGSDAAAALKRYQENAAYDARVSLAKADPLAEPWADAMEDAYFTAFSEAEVLAHARLAQQAGGGAAAEGRIRSELNAAEVVVAAADRPRLFVDLAEAITAAGANVMGARVFTSRAGQALDVFYVQDASGQPFGSHDPRALARLAETLACAARGEPVAREPRKPQDLGRTAAFAITPAVMLDNEASETSTVVEASGRDRPGLLAALARTISDAGLSILSAHIDGYGERAVDAFYVVDADGRKLTDARKRNALKSALLAALTKAEAETAQARRTNLQRARASVAR.

A uridylyltransferase region spans residues 1-379; it reads MPPRLRPTHL…PGRAQKRKPL (379 aa). The segment at 380-733 is uridylyl-removing; sequence DEPGFHEVGG…GRIRSELNAA (354 aa). In terms of domain architecture, HD spans 495 to 617; the sequence is VDEHTLRAVG…VQSPERLRLL (123 aa). ACT domains follow at residues 734-813 and 845-924; these read EVVV…PVAR and VVEA…TAQA.

The protein belongs to the GlnD family. It depends on Mg(2+) as a cofactor.

The catalysed reaction is [protein-PII]-L-tyrosine + UTP = [protein-PII]-uridylyl-L-tyrosine + diphosphate. It catalyses the reaction [protein-PII]-uridylyl-L-tyrosine + H2O = [protein-PII]-L-tyrosine + UMP + H(+). Uridylyltransferase (UTase) activity is inhibited by glutamine, while glutamine activates uridylyl-removing (UR) activity. In terms of biological role, modifies, by uridylylation and deuridylylation, the PII regulatory proteins (GlnB and homologs), in response to the nitrogen status of the cell that GlnD senses through the glutamine level. Under low glutamine levels, catalyzes the conversion of the PII proteins and UTP to PII-UMP and PPi, while under higher glutamine levels, GlnD hydrolyzes PII-UMP to PII and UMP (deuridylylation). Thus, controls uridylylation state and activity of the PII proteins, and plays an important role in the regulation of nitrogen assimilation and metabolism. In Phenylobacterium zucineum (strain HLK1), this protein is Bifunctional uridylyltransferase/uridylyl-removing enzyme.